A 1068-amino-acid polypeptide reads, in one-letter code: Putative protein TIC 214 N-terminal part (1068 aa).

6 consecutive transmembrane segments (helical) span residues Val-11–Ile-31, Ile-68–Ile-88, Leu-92–Ile-112, Ile-131–Leu-151, Phe-166–Leu-186, and Phe-213–Ile-233.

The protein belongs to the TIC214 family. Part of the Tic complex.

It is found in the plastid. The protein resides in the chloroplast inner membrane. Involved in protein precursor import into chloroplasts. May be part of an intermediate translocation complex acting as a protein-conducting channel at the inner envelope. This Marchantia polymorpha (Common liverwort) protein is Putative protein TIC 214 N-terminal part.